The chain runs to 336 residues: DNA-directed RNA polymerase subunit alpha (336 aa).

Positions Met-1–Asn-226 are alpha N-terminal domain (alpha-NTD). The segment at Ala-241–Leu-336 is alpha C-terminal domain (alpha-CTD).

The protein belongs to the RNA polymerase alpha chain family. As to quaternary structure, homodimer. The RNAP catalytic core consists of 2 alpha, 1 beta, 1 beta' and 1 omega subunit. When a sigma factor is associated with the core the holoenzyme is formed, which can initiate transcription.

It carries out the reaction RNA(n) + a ribonucleoside 5'-triphosphate = RNA(n+1) + diphosphate. Its function is as follows. DNA-dependent RNA polymerase catalyzes the transcription of DNA into RNA using the four ribonucleoside triphosphates as substrates. The polypeptide is DNA-directed RNA polymerase subunit alpha (Paenarthrobacter aurescens (strain TC1)).